A 688-amino-acid polypeptide reads, in one-letter code: Glycine--tRNA ligase beta subunit (688 aa).

Belongs to the class-II aminoacyl-tRNA synthetase family. As to quaternary structure, tetramer of two alpha and two beta subunits.

It localises to the cytoplasm. The catalysed reaction is tRNA(Gly) + glycine + ATP = glycyl-tRNA(Gly) + AMP + diphosphate. This is Glycine--tRNA ligase beta subunit from Shewanella sp. (strain MR-7).